Here is a 215-residue protein sequence, read N- to C-terminus: Protein Syd (215 aa).

The protein belongs to the Syd family.

Its subcellular location is the cell inner membrane. Interacts with the SecY protein in vivo. May bind preferentially to an uncomplexed state of SecY, thus functioning either as a chelating agent for excess SecY in the cell or as a regulatory factor that negatively controls the translocase function. The protein is Protein Syd of Shewanella piezotolerans (strain WP3 / JCM 13877).